Reading from the N-terminus, the 743-residue chain is DNA ligase 2 (743 aa).

NAD(+)-binding positions include 45-49 (DADFD), 94-95 (SL), and glutamate 125. The active-site N6-AMP-lysine intermediate is the lysine 127. Positions 148, 185, 301, and 325 each coordinate NAD(+). Residues cysteine 419, cysteine 422, cysteine 438, and cysteine 444 each coordinate Zn(2+). Residues 639–728 (EGPRPLEGLT…PERAKEAALP (90 aa)) enclose the BRCT domain. The segment at 720-743 (ERAKEAALPVPEAAPAADPENSGE) is disordered. The span at 725-743 (AALPVPEAAPAADPENSGE) shows a compositional bias: low complexity.

It belongs to the NAD-dependent DNA ligase family. LigA subfamily. It depends on Mg(2+) as a cofactor. The cofactor is Mn(2+).

The enzyme catalyses NAD(+) + (deoxyribonucleotide)n-3'-hydroxyl + 5'-phospho-(deoxyribonucleotide)m = (deoxyribonucleotide)n+m + AMP + beta-nicotinamide D-nucleotide.. Functionally, DNA ligase that catalyzes the formation of phosphodiester linkages between 5'-phosphoryl and 3'-hydroxyl groups in double-stranded DNA using NAD as a coenzyme and as the energy source for the reaction. It is essential for DNA replication and repair of damaged DNA. The chain is DNA ligase 2 from Streptomyces griseus subsp. griseus (strain JCM 4626 / CBS 651.72 / NBRC 13350 / KCC S-0626 / ISP 5235).